The chain runs to 276 residues: UPF0276 protein AM1_3026 (276 aa).

This sequence belongs to the UPF0276 family.

This Acaryochloris marina (strain MBIC 11017) protein is UPF0276 protein AM1_3026.